Reading from the N-terminus, the 320-residue chain is Malate dehydrogenase 2 (320 aa).

NAD(+) is bound by residues 10-15 and aspartate 34; that span reads GAGQIG. Residues arginine 83 and arginine 89 each contribute to the substrate site. Residues asparagine 96 and 119-121 each bind NAD(+); that span reads ITN. The substrate site is built by asparagine 121 and arginine 152. Histidine 176 (proton acceptor) is an active-site residue.

It belongs to the LDH/MDH superfamily. MDH type 3 family.

It catalyses the reaction (S)-malate + NAD(+) = oxaloacetate + NADH + H(+). Functionally, catalyzes the reversible oxidation of malate to oxaloacetate. This is Malate dehydrogenase 2 from Rhodopseudomonas palustris (strain BisB18).